The following is a 27-amino-acid chain: RDSXVTIVPLRNMRDIVYVGXITIGTP.

Belongs to the peptidase A1 family. In terms of processing, glycosylated. As to expression, placenta.

This is Pregnancy-associated glycoprotein 62 (PAG62) from Capra hircus (Goat).